Here is a 405-residue protein sequence, read N- to C-terminus: Diaminopimelate decarboxylase (405 aa).

Residue lysine 46 is modified to N6-(pyridoxal phosphate)lysine. Residues glycine 225 and 259-262 (EPGR) each bind pyridoxal 5'-phosphate. Positions 262, 298, and 302 each coordinate substrate. The Proton donor role is filled by cysteine 329. Substrate is bound by residues glutamate 330 and tyrosine 358. Tyrosine 358 is a pyridoxal 5'-phosphate binding site.

It belongs to the Orn/Lys/Arg decarboxylase class-II family. LysA subfamily. As to quaternary structure, homodimer. Pyridoxal 5'-phosphate serves as cofactor.

It catalyses the reaction meso-2,6-diaminopimelate + H(+) = L-lysine + CO2. It participates in amino-acid biosynthesis; L-lysine biosynthesis via DAP pathway; L-lysine from DL-2,6-diaminopimelate: step 1/1. Functionally, specifically catalyzes the decarboxylation of meso-diaminopimelate (meso-DAP) to L-lysine. This Helicobacter pylori (strain J99 / ATCC 700824) (Campylobacter pylori J99) protein is Diaminopimelate decarboxylase.